Reading from the N-terminus, the 157-residue chain is Transcriptional repressor NrdR (157 aa).

The segment at 3–34 (CPSCQNTDSRVLESRSADAGKCVRRRRECLNC) is a zinc-finger region. An ATP-cone domain is found at 49–139 (VTVIKRSNAK…VYRQFNGIED (91 aa)).

Belongs to the NrdR family. The cofactor is Zn(2+).

In terms of biological role, negatively regulates transcription of bacterial ribonucleotide reductase nrd genes and operons by binding to NrdR-boxes. This is Transcriptional repressor NrdR from Prochlorococcus marinus (strain SARG / CCMP1375 / SS120).